An 85-amino-acid chain; its full sequence is Large ribosomal subunit protein bL27 (85 aa).

The segment at 1–25 (MAHKKAGSSSKNGRDSNPQYLGVKR) is disordered. The segment covering 7-19 (GSSSKNGRDSNPQ) has biased composition (polar residues).

It belongs to the bacterial ribosomal protein bL27 family.

The protein is Large ribosomal subunit protein bL27 of Micrococcus luteus (strain ATCC 4698 / DSM 20030 / JCM 1464 / CCM 169 / CCUG 5858 / IAM 1056 / NBRC 3333 / NCIMB 9278 / NCTC 2665 / VKM Ac-2230) (Micrococcus lysodeikticus).